A 292-amino-acid polypeptide reads, in one-letter code: Cbb3-type cytochrome c oxidase subunit CcoP (292 aa).

Transmembrane regions (helical) follow at residues 11–31 (FGLIAALVILVLTIYESSSLI) and 62–82 (VGWIASFMCTIVWAFWYFFFG). Cytochrome c domains lie at 116–195 (ELVD…MAEI) and 205–288 (QLID…QSLK). Cysteine 129, cysteine 132, histidine 133, methionine 174, cysteine 219, cysteine 222, histidine 223, and methionine 264 together coordinate heme c.

The protein belongs to the CcoP / FixP family. Component of the cbb3-type cytochrome c oxidase at least composed of CcoN, CcoO, CcoQ and CcoP. It depends on heme c as a cofactor.

The protein resides in the cell inner membrane. Its pathway is energy metabolism; oxidative phosphorylation. Functionally, C-type cytochrome. Part of the cbb3-type cytochrome c oxidase complex. CcoP subunit is required for transferring electrons from donor cytochrome c via its heme groups to CcoO subunit. From there, electrons are shuttled to the catalytic binuclear center of CcoN subunit where oxygen reduction takes place. The complex also functions as a proton pump. This chain is Cbb3-type cytochrome c oxidase subunit CcoP, found in Helicobacter pylori (Campylobacter pylori).